The primary structure comprises 371 residues: GDSL esterase/lipase At3g27950 (371 aa).

An N-terminal signal peptide occupies residues 1–23 (MAISKITLAIIVLLLGFTEKLSA). The Nucleophile role is filled by serine 39. N-linked (GlcNAc...) asparagine glycans are attached at residues asparagine 82, asparagine 143, asparagine 178, asparagine 194, and asparagine 315. Catalysis depends on residues aspartate 334 and histidine 337.

The protein belongs to the 'GDSL' lipolytic enzyme family.

The protein localises to the secreted. This Arabidopsis thaliana (Mouse-ear cress) protein is GDSL esterase/lipase At3g27950.